The following is a 303-amino-acid chain: Probable aspartoacylase (303 aa).

His13 and Glu16 together coordinate Zn(2+). Substrate-binding positions include Arg55 and 62 to 63; that span reads NR. His104 lines the Zn(2+) pocket. The substrate site is built by Glu162 and Tyr273.

This sequence belongs to the AspA/AstE family. Aspartoacylase subfamily. The cofactor is Zn(2+).

The catalysed reaction is an N-acyl-L-aspartate + H2O = a carboxylate + L-aspartate. The chain is Probable aspartoacylase from Parasynechococcus marenigrum (strain WH8102).